Here is a 220-residue protein sequence, read N- to C-terminus: Adenylate kinase (220 aa).

10 to 15 (GAGKGT) provides a ligand contact to ATP. An NMP region spans residues 30–59 (STGDMLRAAVKAGSPLGVEAKGYMDAGKLV). AMP-binding positions include T31, R36, 57–59 (KLV), 85–88 (GFPR), and Q92. The segment at 122-159 (GRRTHPASGRTYHVKFNPPKVEGKDDVTGEPLIQRDDD) is LID. ATP-binding positions include R123 and 132–133 (TY). Residues R156 and R167 each contribute to the AMP site. G206 is an ATP binding site.

It belongs to the adenylate kinase family. Monomer.

It localises to the cytoplasm. It catalyses the reaction AMP + ATP = 2 ADP. The protein operates within purine metabolism; AMP biosynthesis via salvage pathway; AMP from ADP: step 1/1. Catalyzes the reversible transfer of the terminal phosphate group between ATP and AMP. Plays an important role in cellular energy homeostasis and in adenine nucleotide metabolism. The protein is Adenylate kinase of Burkholderia ambifaria (strain ATCC BAA-244 / DSM 16087 / CCUG 44356 / LMG 19182 / AMMD) (Burkholderia cepacia (strain AMMD)).